Here is a 147-residue protein sequence, read N- to C-terminus: Peptidyl-lysine N-acetyltransferase YjaB (147 aa).

Residues 3 to 144 (ISIRRSRHEE…KPYPLLNLAY (142 aa)) enclose the N-acetyltransferase domain.

This sequence belongs to the acetyltransferase family.

It catalyses the reaction L-lysyl-[protein] + acetyl-CoA = N(6)-acetyl-L-lysyl-[protein] + CoA + H(+). N-epsilon-lysine acetyltransferase that catalyzes acetylation of a large number of proteins. Binds acetyl-CoA. In Escherichia coli (strain K12), this protein is Peptidyl-lysine N-acetyltransferase YjaB (yjaB).